The primary structure comprises 745 residues: Probable endochitinase ARB_07371 (745 aa).

An N-terminal signal peptide occupies residues Met-1 to Ala-23. Residues Thr-30–Asn-351 form the GH18 domain. Glu-178 functions as the Proton donor in the catalytic mechanism. 2 disordered regions span residues Asn-351 to Thr-372 and Trp-395 to Ile-446. Low complexity predominate over residues Thr-357–Thr-372. 2 N-linked (GlcNAc...) asparagine glycosylation sites follow: Asn-438 and Asn-484. Residues Ser-651 to Thr-715 form a disordered region. A lipid anchor (GPI-anchor amidated glycine) is attached at Gly-720. Residues Gly-721 to Gln-745 constitute a propeptide, removed in mature form.

Belongs to the glycosyl hydrolase 18 family. Chitinase class III subfamily.

It localises to the cell membrane. Its subcellular location is the secreted. The protein resides in the cell wall. The enzyme catalyses Random endo-hydrolysis of N-acetyl-beta-D-glucosaminide (1-&gt;4)-beta-linkages in chitin and chitodextrins.. GPI-anchored chitinase involved in the degradation of chitin, a component of the cell walls of fungi and exoskeletal elements of some animals (including worms and arthropods). Required to reshape the cell wall at the sites where cell wall remodeling and/or cell wall maturation actively take place such as sites of conidia formation. The protein is Probable endochitinase ARB_07371 of Arthroderma benhamiae (strain ATCC MYA-4681 / CBS 112371) (Trichophyton mentagrophytes).